Consider the following 379-residue polypeptide: Muconate cycloisomerase 1-1 (379 aa).

K169 is a catalytic residue. D198, E224, and D247 together coordinate Mn(2+).

It belongs to the mandelate racemase/muconate lactonizing enzyme family. Homooctamer. It depends on Mn(2+) as a cofactor.

It catalyses the reaction (S)-muconolactone = cis,cis-muconate + H(+). Its pathway is aromatic compound metabolism; beta-ketoadipate pathway; 5-oxo-4,5-dihydro-2-furylacetate from catechol: step 2/3. Catalyzes a syn cycloisomerization. This chain is Muconate cycloisomerase 1-1 (catB1), found in Acinetobacter lwoffii.